Here is a 433-residue protein sequence, read N- to C-terminus: 5-methylthioadenosine/S-adenosylhomocysteine deaminase (433 aa).

Zn(2+) is bound by residues His-67 and His-69. The substrate site is built by Glu-96, Arg-148, Arg-158, and His-186. Residue His-213 coordinates Zn(2+). Positions 216 and 301 each coordinate substrate. Asp-301 contributes to the Zn(2+) binding site.

It belongs to the metallo-dependent hydrolases superfamily. MTA/SAH deaminase family. Requires Zn(2+) as cofactor.

It catalyses the reaction S-adenosyl-L-homocysteine + H2O + H(+) = S-inosyl-L-homocysteine + NH4(+). The catalysed reaction is S-methyl-5'-thioadenosine + H2O + H(+) = S-methyl-5'-thioinosine + NH4(+). Catalyzes the deamination of 5-methylthioadenosine and S-adenosyl-L-homocysteine into 5-methylthioinosine and S-inosyl-L-homocysteine, respectively. Is also able to deaminate adenosine. In Pelotomaculum thermopropionicum (strain DSM 13744 / JCM 10971 / SI), this protein is 5-methylthioadenosine/S-adenosylhomocysteine deaminase.